A 289-amino-acid polypeptide reads, in one-letter code: tRNA(Ile)-lysidine synthase (289 aa).

11–16 (SGGPDS) serves as a coordination point for ATP.

Belongs to the tRNA(Ile)-lysidine synthase family.

The protein resides in the cytoplasm. The catalysed reaction is cytidine(34) in tRNA(Ile2) + L-lysine + ATP = lysidine(34) in tRNA(Ile2) + AMP + diphosphate + H(+). Its function is as follows. Ligates lysine onto the cytidine present at position 34 of the AUA codon-specific tRNA(Ile) that contains the anticodon CAU, in an ATP-dependent manner. Cytidine is converted to lysidine, thus changing the amino acid specificity of the tRNA from methionine to isoleucine. In Mycoplasma pneumoniae (strain ATCC 29342 / M129 / Subtype 1) (Mycoplasmoides pneumoniae), this protein is tRNA(Ile)-lysidine synthase.